Here is a 231-residue protein sequence, read N- to C-terminus: Ribosomal RNA small subunit methyltransferase nep-1 (231 aa).

S-adenosyl-L-methionine contacts are provided by residues Met161, Gly188, Gly193, and 206 to 211 (ISNYPL).

The protein belongs to the class IV-like SAM-binding methyltransferase superfamily. RNA methyltransferase NEP1 family. In terms of assembly, homodimer.

It is found in the nucleus. Its subcellular location is the nucleolus. The catalysed reaction is a pseudouridine in rRNA + S-adenosyl-L-methionine = an N(1)-methylpseudouridine in rRNA + S-adenosyl-L-homocysteine + H(+). In terms of biological role, S-adenosyl-L-methionine-dependent pseudouridine N(1)-methyltransferase that methylates a pseudouridine in 18S rRNA. Involved the biosynthesis of the hypermodified N1-methyl-N3-(3-amino-3-carboxypropyl) pseudouridine (m1acp3-Psi) conserved in eukaryotic 18S rRNA. Also has an essential role in 40S ribosomal subunit biogenesis independent on its methyltransferase activity, facilitating the incorporation of ribosomal protein S19 during the formation of pre-ribosomes. The protein is Ribosomal RNA small subunit methyltransferase nep-1 of Caenorhabditis elegans.